Reading from the N-terminus, the 519-residue chain is Probable cytosol aminopeptidase (519 aa).

The Mn(2+) site is built by lysine 283 and aspartate 288. Lysine 295 is an active-site residue. 3 residues coordinate Mn(2+): aspartate 306, aspartate 365, and glutamate 367. Arginine 369 is a catalytic residue.

The protein belongs to the peptidase M17 family. The cofactor is Mn(2+).

Its subcellular location is the cytoplasm. The enzyme catalyses Release of an N-terminal amino acid, Xaa-|-Yaa-, in which Xaa is preferably Leu, but may be other amino acids including Pro although not Arg or Lys, and Yaa may be Pro. Amino acid amides and methyl esters are also readily hydrolyzed, but rates on arylamides are exceedingly low.. It catalyses the reaction Release of an N-terminal amino acid, preferentially leucine, but not glutamic or aspartic acids.. In terms of biological role, presumably involved in the processing and regular turnover of intracellular proteins. Catalyzes the removal of unsubstituted N-terminal amino acids from various peptides. This Mycobacterium marinum (strain ATCC BAA-535 / M) protein is Probable cytosol aminopeptidase.